We begin with the raw amino-acid sequence, 205 residues long: Glycerol-3-phosphate acyltransferase (205 aa).

5 helical membrane passes run 4 to 24, 80 to 100, 107 to 127, 130 to 150, and 155 to 175; these read IAPGLVLLAYLCGSISSAILV, PFWLGLVAIAACVGHIWPVFF, GVATAFGAIAPIGLDLTGVMA, WLLTILLSGYSSLGAIVSALI, and VWWFKPQYTFPVSMLSCLILL.

This sequence belongs to the PlsY family. As to quaternary structure, probably interacts with PlsX.

Its subcellular location is the cell inner membrane. It carries out the reaction an acyl phosphate + sn-glycerol 3-phosphate = a 1-acyl-sn-glycero-3-phosphate + phosphate. Its pathway is lipid metabolism; phospholipid metabolism. In terms of biological role, catalyzes the transfer of an acyl group from acyl-phosphate (acyl-PO(4)) to glycerol-3-phosphate (G3P) to form lysophosphatidic acid (LPA). This enzyme utilizes acyl-phosphate as fatty acyl donor, but not acyl-CoA or acyl-ACP. The sequence is that of Glycerol-3-phosphate acyltransferase from Klebsiella pneumoniae subsp. pneumoniae (strain ATCC 700721 / MGH 78578).